The following is a 1507-amino-acid chain: DNA-directed RNA polymerase subunit beta' (1507 aa).

Positions 71, 73, 86, and 89 each coordinate Zn(2+). 3 residues coordinate Mg(2+): aspartate 470, aspartate 472, and aspartate 474. Positions 800, 874, 881, and 884 each coordinate Zn(2+).

This sequence belongs to the RNA polymerase beta' chain family. As to quaternary structure, the RNAP catalytic core consists of 2 alpha, 1 beta, 1 beta' and 1 omega subunit. When a sigma factor is associated with the core the holoenzyme is formed, which can initiate transcription. Requires Mg(2+) as cofactor. It depends on Zn(2+) as a cofactor.

It catalyses the reaction RNA(n) + a ribonucleoside 5'-triphosphate = RNA(n+1) + diphosphate. In terms of biological role, DNA-dependent RNA polymerase catalyzes the transcription of DNA into RNA using the four ribonucleoside triphosphates as substrates. The sequence is that of DNA-directed RNA polymerase subunit beta' from Nitratiruptor sp. (strain SB155-2).